We begin with the raw amino-acid sequence, 579 residues long: Eukaryotic translation initiation factor 3 subunit D (579 aa).

Disordered regions lie at residues methionine 1–serine 20, asparagine 51–aspartate 72, and arginine 109–lysine 170. The span at asparagine 51–glycine 64 shows a compositional bias: low complexity. Positions glycine 120–phenylalanine 167 are enriched in gly residues. An RNA gate region spans residues alanine 307–proline 321.

Belongs to the eIF-3 subunit D family. As to quaternary structure, component of the eukaryotic translation initiation factor 3 (eIF-3) complex.

It is found in the cytoplasm. Its function is as follows. mRNA cap-binding component of the eukaryotic translation initiation factor 3 (eIF-3) complex, which is involved in protein synthesis of a specialized repertoire of mRNAs and, together with other initiation factors, stimulates binding of mRNA and methionyl-tRNAi to the 40S ribosome. The eIF-3 complex specifically targets and initiates translation of a subset of mRNAs involved in cell proliferation. In the eIF-3 complex, eif3d specifically recognizes and binds the 7-methylguanosine cap of a subset of mRNAs. This is Eukaryotic translation initiation factor 3 subunit D from Mycosarcoma maydis (Corn smut fungus).